We begin with the raw amino-acid sequence, 681 residues long: Sodium-dependent phosphate transporter 1 (681 aa).

Transmembrane regions (helical) follow at residues 25-45, 66-86, 106-126, 162-182, 201-221, and 234-254; these read NLWM…SVGA, ACIL…AKVS, LMAG…VASF, IVMS…ILFF, ALPI…MYTG, and GTIL…WFFV. Positions 266-295 are disordered; the sequence is VKSSPSESPLMEKKNNLKDHEETKMAPGDV. A phosphoserine mark is found at Ser269 and Ser273. The segment covering 275 to 289 has biased composition (basic and acidic residues); it reads LMEKKNNLKDHEETK. 4 helical membrane passes run 513–533, 561–581, 602–622, and 652–672; these read VSLL…FAHG, ATPI…LWVW, FSIE…GLPI, and IFMA…AIMA.

This sequence belongs to the inorganic phosphate transporter (PiT) (TC 2.A.20) family. In terms of tissue distribution, ubiquitously expressed.

It is found in the cell membrane. The catalysed reaction is 2 Na(+)(out) + phosphate(out) = 2 Na(+)(in) + phosphate(in). Functionally, sodium-phosphate symporter which preferentially transports the monovalent form of phosphate with a stoichiometry of two sodium ions per phosphate ion. May play a role in extracellular matrix and cartilage calcification as well as in vascular calcification. Essential for cell proliferation but this function is independent of its phosphate transporter activity. The sequence is that of Sodium-dependent phosphate transporter 1 (Slc20a1) from Rattus norvegicus (Rat).